Reading from the N-terminus, the 497-residue chain is Galactose-1-phosphate uridylyltransferase (497 aa).

Belongs to the galactose-1-phosphate uridylyltransferase type 2 family.

The protein localises to the cytoplasm. The catalysed reaction is alpha-D-galactose 1-phosphate + UDP-alpha-D-glucose = alpha-D-glucose 1-phosphate + UDP-alpha-D-galactose. Its pathway is carbohydrate metabolism; galactose metabolism. The sequence is that of Galactose-1-phosphate uridylyltransferase from Enterococcus faecalis (strain ATCC 700802 / V583).